The following is a 945-amino-acid chain: Argonaute protein wago-1 (945 aa).

The span at Met1–Ala20 shows a compositional bias: pro residues. The disordered stretch occupies residues Met1 to Ser41. A PAZ domain is found at Thr322–Arg432. The Piwi domain occupies Val636 to Lys899.

Belongs to the Argonaute family. WAGO subfamily. Interacts with rde-12. Interacts with znfx-1. As to expression, enriched in sperm and oocytes.

Its subcellular location is the cytoplasmic granule. In terms of biological role, argonaute protein which is involved in the endogenous small interfering RNA (endo-siRNA) pathway. Interacts with secondary 22G-RNAs, which are RNA-dependent RNA polymerase-derived endo-siRNAs, typically 22 nucleotides in length with a 5'guanosine residue. In the germline, functions in a genome surveillance system to silence transposons and aberrant transcripts. This chain is Argonaute protein wago-1, found in Caenorhabditis elegans.